Reading from the N-terminus, the 160-residue chain is Putative antiporter subunit mnhE2 (160 aa).

Helical transmembrane passes span 23–43 (FKFTTFFAGFLIGLIVIYILH), 55–75 (IWVAIKFLAVYLYQLITSSIS), and 100–120 (SNWAITFLTILIIITPGSTVI).

Belongs to the CPA3 antiporters (TC 2.A.63) subunit E family. In terms of assembly, may form a heterooligomeric complex that consists of seven subunits: mnhA2, mnhB2, mnhC2, mnhD2, mnhE2, mnhF2 and mnhG2.

The protein localises to the cell membrane. In Staphylococcus epidermidis (strain ATCC 35984 / DSM 28319 / BCRC 17069 / CCUG 31568 / BM 3577 / RP62A), this protein is Putative antiporter subunit mnhE2 (mnhE2).